Reading from the N-terminus, the 397-residue chain is Riboflavin biosynthesis protein RibBA (397 aa).

The tract at residues 1–199 (MFHRIEEALE…IEDLIAYRRH (199 aa)) is DHBP synthase. D-ribulose 5-phosphate is bound by residues 26–27 (RE), Asp31, 138–142 (RAGHT), and Glu162. Residue Glu27 coordinates Mg(2+). Position 141 (His141) interacts with Mg(2+). A GTP cyclohydrolase II region spans residues 200–397 (HETLVTREVE…VNKLGHLLNL (198 aa)). 250-254 (RVHSE) serves as a coordination point for GTP. The Zn(2+) site is built by Cys255, Cys266, and Cys268. GTP contacts are provided by residues Gln271, 293–295 (EGR), and Thr315. Residue Asp327 is the Proton acceptor; for GTP cyclohydrolase activity of the active site. Arg329 acts as the Nucleophile; for GTP cyclohydrolase activity in catalysis. The GTP site is built by Thr350 and Lys355.

The protein in the N-terminal section; belongs to the DHBP synthase family. This sequence in the C-terminal section; belongs to the GTP cyclohydrolase II family. Requires Mg(2+) as cofactor. The cofactor is Mn(2+). It depends on Zn(2+) as a cofactor.

It carries out the reaction D-ribulose 5-phosphate = (2S)-2-hydroxy-3-oxobutyl phosphate + formate + H(+). It catalyses the reaction GTP + 4 H2O = 2,5-diamino-6-hydroxy-4-(5-phosphoribosylamino)-pyrimidine + formate + 2 phosphate + 3 H(+). The protein operates within cofactor biosynthesis; riboflavin biosynthesis; 2-hydroxy-3-oxobutyl phosphate from D-ribulose 5-phosphate: step 1/1. It functions in the pathway cofactor biosynthesis; riboflavin biosynthesis; 5-amino-6-(D-ribitylamino)uracil from GTP: step 1/4. Its function is as follows. Catalyzes the conversion of D-ribulose 5-phosphate to formate and 3,4-dihydroxy-2-butanone 4-phosphate. Functionally, catalyzes the conversion of GTP to 2,5-diamino-6-ribosylamino-4(3H)-pyrimidinone 5'-phosphate (DARP), formate and pyrophosphate. The protein is Riboflavin biosynthesis protein RibBA of Bacillus cereus (strain ATCC 10987 / NRS 248).